A 170-amino-acid polypeptide reads, in one-letter code: Peptide methionine sulfoxide reductase MsrA (170 aa).

The active site involves Cys-14.

This sequence belongs to the MsrA Met sulfoxide reductase family.

The enzyme catalyses L-methionyl-[protein] + [thioredoxin]-disulfide + H2O = L-methionyl-(S)-S-oxide-[protein] + [thioredoxin]-dithiol. It catalyses the reaction [thioredoxin]-disulfide + L-methionine + H2O = L-methionine (S)-S-oxide + [thioredoxin]-dithiol. Functionally, has an important function as a repair enzyme for proteins that have been inactivated by oxidation. Catalyzes the reversible oxidation-reduction of methionine sulfoxide in proteins to methionine. The sequence is that of Peptide methionine sulfoxide reductase MsrA from Streptomyces avermitilis (strain ATCC 31267 / DSM 46492 / JCM 5070 / NBRC 14893 / NCIMB 12804 / NRRL 8165 / MA-4680).